The primary structure comprises 486 residues: L-carnitine:corrinoid methyltransferase (486 aa).

The protein belongs to the trimethylamine methyltransferase family. As to quaternary structure, the L-carnitine:THF methyl transfer system is composed of two methyltransferases, MtcB and MtqA, and the corrinoid protein MtqC.

The enzyme catalyses Co(I)-[quaternary-amine-specific corrinoid protein] + (R)-carnitine + H(+) = (3R)-4-(dimethylamino)-3-hydroxybutanoate + methyl-Co(III)-[quaternary-amine-specific corrinoid protein]. Functionally, involved in the degradation of the quaternary amine L-carnitine. Component of a corrinoid-dependent methyltransferase system that transfers a methyl group from L-carnitine to tetrahydrofolate (THF), forming methyl-THF, a key intermediate in the Wood-Ljungdahl acetogenesis pathway. MtcB catalyzes the methylation of the corrinoid protein MtqC, using L-carnitine as the methyl donor. L-carnitine demethylation generates the unusual biological product norcarnitine, which is likely degraded by other members of the gut microbiota. In vitro, can methylate free cob(I)alamin. The chain is L-carnitine:corrinoid methyltransferase from Eubacterium limosum.